The sequence spans 194 residues: Ion-translocating oxidoreductase complex subunit A (194 aa).

Helical transmembrane passes span 5–25 (VLIL…FLGL), 47–67 (FVLT…LVPF), 72–92 (LRTI…EMFV), 102–122 (VLGV…VALL), 135–155 (LTYG…FAAM), and 172–192 (SIGL…SGLI).

This sequence belongs to the NqrDE/RnfAE family. The complex is composed of six subunits: RnfA, RnfB, RnfC, RnfD, RnfE and RnfG.

The protein localises to the cell inner membrane. Its function is as follows. Part of a membrane-bound complex that couples electron transfer with translocation of ions across the membrane. The protein is Ion-translocating oxidoreductase complex subunit A of Alcanivorax borkumensis (strain ATCC 700651 / DSM 11573 / NCIMB 13689 / SK2).